The chain runs to 286 residues: Undecaprenyl-diphosphatase (286 aa).

7 helical membrane-spanning segments follow: residues 50-70 (GAAF…VYFW), 97-117 (MGWL…IFQD), 126-146 (LWIV…ADAV), 156-176 (LTYK…IPGV), 200-220 (SFLL…YKVM), 236-256 (LATL…LKFV), and 264-284 (FVWY…FNVI).

It belongs to the UppP family.

The protein localises to the cell membrane. It catalyses the reaction di-trans,octa-cis-undecaprenyl diphosphate + H2O = di-trans,octa-cis-undecaprenyl phosphate + phosphate + H(+). Its function is as follows. Catalyzes the dephosphorylation of undecaprenyl diphosphate (UPP). Confers resistance to bacitracin. This Arthrobacter sp. (strain FB24) protein is Undecaprenyl-diphosphatase.